The chain runs to 264 residues: Thiazole synthase (264 aa).

The active-site Schiff-base intermediate with DXP is lysine 98. Residues glycine 159, alanine 185–glycine 186, and alanine 207–serine 208 contribute to the 1-deoxy-D-xylulose 5-phosphate site.

The protein belongs to the ThiG family. In terms of assembly, homotetramer. Forms heterodimers with either ThiH or ThiS.

It localises to the cytoplasm. The enzyme catalyses [ThiS sulfur-carrier protein]-C-terminal-Gly-aminoethanethioate + 2-iminoacetate + 1-deoxy-D-xylulose 5-phosphate = [ThiS sulfur-carrier protein]-C-terminal Gly-Gly + 2-[(2R,5Z)-2-carboxy-4-methylthiazol-5(2H)-ylidene]ethyl phosphate + 2 H2O + H(+). The protein operates within cofactor biosynthesis; thiamine diphosphate biosynthesis. Catalyzes the rearrangement of 1-deoxy-D-xylulose 5-phosphate (DXP) to produce the thiazole phosphate moiety of thiamine. Sulfur is provided by the thiocarboxylate moiety of the carrier protein ThiS. In vitro, sulfur can be provided by H(2)S. This is Thiazole synthase from Streptomyces griseus subsp. griseus (strain JCM 4626 / CBS 651.72 / NBRC 13350 / KCC S-0626 / ISP 5235).